The following is a 705-amino-acid chain: Elongation factor G (705 aa).

In terms of domain architecture, tr-type G spans 8–290 (HRYRNIGIMA…GVIHLLPSPA (283 aa)). Residues 17–24 (AHIDAGKT), 88–92 (DTPGH), and 142–145 (NKMD) each bind GTP.

The protein belongs to the TRAFAC class translation factor GTPase superfamily. Classic translation factor GTPase family. EF-G/EF-2 subfamily.

It localises to the cytoplasm. Its function is as follows. Catalyzes the GTP-dependent ribosomal translocation step during translation elongation. During this step, the ribosome changes from the pre-translocational (PRE) to the post-translocational (POST) state as the newly formed A-site-bound peptidyl-tRNA and P-site-bound deacylated tRNA move to the P and E sites, respectively. Catalyzes the coordinated movement of the two tRNA molecules, the mRNA and conformational changes in the ribosome. This chain is Elongation factor G, found in Xylella fastidiosa (strain M23).